The chain runs to 175 residues: Crossover junction endodeoxyribonuclease RuvC (175 aa).

Residues Asp-16, Glu-76, and Asp-148 contribute to the active site. Positions 16, 76, and 148 each coordinate Mg(2+).

The protein belongs to the RuvC family. Homodimer which binds Holliday junction (HJ) DNA. The HJ becomes 2-fold symmetrical on binding to RuvC with unstacked arms; it has a different conformation from HJ DNA in complex with RuvA. In the full resolvosome a probable DNA-RuvA(4)-RuvB(12)-RuvC(2) complex forms which resolves the HJ. Mg(2+) is required as a cofactor.

The protein localises to the cytoplasm. The catalysed reaction is Endonucleolytic cleavage at a junction such as a reciprocal single-stranded crossover between two homologous DNA duplexes (Holliday junction).. Functionally, the RuvA-RuvB-RuvC complex processes Holliday junction (HJ) DNA during genetic recombination and DNA repair. Endonuclease that resolves HJ intermediates. Cleaves cruciform DNA by making single-stranded nicks across the HJ at symmetrical positions within the homologous arms, yielding a 5'-phosphate and a 3'-hydroxyl group; requires a central core of homology in the junction. The consensus cleavage sequence is 5'-(A/T)TT(C/G)-3'. Cleavage occurs on the 3'-side of the TT dinucleotide at the point of strand exchange. HJ branch migration catalyzed by RuvA-RuvB allows RuvC to scan DNA until it finds its consensus sequence, where it cleaves and resolves the cruciform DNA. This Rhodopseudomonas palustris (strain BisB18) protein is Crossover junction endodeoxyribonuclease RuvC.